The primary structure comprises 475 residues: ESX-3 secretion system protein EccD3 (475 aa).

The next 11 helical transmembrane spans lie at 132-152, 161-181, 186-206, 212-232, 241-261, 264-284, 333-353, 354-374, 384-404, 409-429, and 453-473; these read IARG…GLSV, LLGQ…ALAV, AVLA…AFAL, FGAP…LISM, IAVF…AGAA, WVIS…IVTV, GVIA…VSSA, NASP…ALRA, AWLL…FVIG, AALW…VAAL, and GLDA…SLVL.

The protein belongs to the EccD/Snm4 family. Part of the ESX-3 / type VII secretion system (T7SS), which is composed of cytosolic and membrane components. The ESX-3 membrane complex is composed of EccB3, EccC3, EccD3 and EccE3.

The protein resides in the cell inner membrane. Its function is as follows. Part of the ESX-3 specialized secretion system, which is required for siderophore-mediated iron acquisition and for the secretion of EsxH and EsxG. In Mycolicibacterium smegmatis (strain ATCC 700084 / mc(2)155) (Mycobacterium smegmatis), this protein is ESX-3 secretion system protein EccD3.